The primary structure comprises 477 residues: Protoporphyrinogen oxidase (477 aa).

Residues 9–14, Trp-42, 57–60, Val-257, Ala-449, and 454–456 contribute to the FAD site; these read GGGISG, GPRG, and VAV.

It belongs to the protoporphyrinogen/coproporphyrinogen oxidase family. Protoporphyrinogen oxidase subfamily. As to quaternary structure, monomer. Homodimer. FAD serves as cofactor. In terms of tissue distribution, detected in liver (at protein level).

The protein localises to the mitochondrion inner membrane. It carries out the reaction protoporphyrinogen IX + 3 O2 = protoporphyrin IX + 3 H2O2. It participates in porphyrin-containing compound metabolism; protoporphyrin-IX biosynthesis; protoporphyrin-IX from protoporphyrinogen-IX: step 1/1. In terms of biological role, catalyzes the 6-electron oxidation of protoporphyrinogen-IX to form protoporphyrin-IX. This is Protoporphyrinogen oxidase (PPOX) from Bos taurus (Bovine).